The chain runs to 333 residues: L-lactate dehydrogenase B chain (333 aa).

Residues 29–57 (GQVGMACAISILGKGLCDELALVDVLEDK) and R99 contribute to the NAD(+) site. Residues R106, N138, and R169 each coordinate substrate. N138 is an NAD(+) binding site. H193 (proton acceptor) is an active-site residue. T248 contacts substrate.

This sequence belongs to the LDH/MDH superfamily. LDH family. In terms of assembly, homotetramer.

It is found in the cytoplasm. The enzyme catalyses (S)-lactate + NAD(+) = pyruvate + NADH + H(+). It functions in the pathway fermentation; pyruvate fermentation to lactate; (S)-lactate from pyruvate: step 1/1. Its function is as follows. Interconverts simultaneously and stereospecifically pyruvate and lactate with concomitant interconversion of NADH and NAD(+). The sequence is that of L-lactate dehydrogenase B chain (LDHB) from Pelodiscus sinensis japonicus (Chinese soft-shelled turtle).